A 172-amino-acid chain; its full sequence is Type IV secretion system putative outer membrane lipoprotein BAB2_0057 (172 aa).

The signal sequence occupies residues 1–15; it reads MRTLVMVACAVSLAA. Cys-16 is lipidated: N-palmitoyl cysteine. A lipid anchor (S-diacylglycerol cysteine) is attached at Cys-16. Residues 58–172 enclose the OmpA-like domain; it reads WPARPPKQTV…RRVDIEILRK (115 aa).

The protein resides in the cell outer membrane. Its function is as follows. The virB operon is essential for intracellular survival and is not involved in the invasion process. Constitutes a major determinant of virulence in mice. This protein is essential for pathogenesis in mice but is not required for intracellular survival. This chain is Type IV secretion system putative outer membrane lipoprotein BAB2_0057, found in Brucella abortus (strain 2308).